We begin with the raw amino-acid sequence, 60 residues long: Small ribosomal subunit protein eS17 (60 aa).

It belongs to the eukaryotic ribosomal protein eS17 family.

This Methanosphaera stadtmanae (strain ATCC 43021 / DSM 3091 / JCM 11832 / MCB-3) protein is Small ribosomal subunit protein eS17.